We begin with the raw amino-acid sequence, 348 residues long: MSLFVASRSAFRAAAPLKRQFQIRRYATEPPSADAKKGNNTLLYGAAAAAVAGAGYYFLGGTPAAKKAEEKVKDASSAAAGKLSTSEVKQALTGGEQGWVSLKLEEVEIVNHNSKRLRFRLPEDDMVSGVHVASAILTKFKPVDAEKPVIRPYTPTNDEDARGYLDLLVKKYPNGPMSTHLHDMVPGQRLDVKGPLPKYPWTANKHGHIALVAGGTGITPMFQLCRAIFNNPDDQTKVTLVFGNVREDDILLKKELAALENNNPRRFRAFYVLDDPPKHWTGGKGFITKDLLKTVLPEPKDENIKVFVCGPPGMMDAISGNKKSPKDQGELKGILKELGYSPEQVYKF.

A helical transmembrane segment spans residues 41–61 (TLLYGAAAAAVAGAGYYFLGG). One can recognise an FAD-binding FR-type domain in the interval 97 to 202 (QGWVSLKLEE…KGPLPKYPWT (106 aa)). 205–240 (KHGHIALVAGGTGITPMFQLCRAIFNNPDDQTKVTL) serves as a coordination point for FAD.

Belongs to the flavoprotein pyridine nucleotide cytochrome reductase family. The cofactor is FAD.

The protein resides in the mitochondrion outer membrane. It catalyses the reaction 2 Fe(III)-[cytochrome b5] + NADH = 2 Fe(II)-[cytochrome b5] + NAD(+) + H(+). In terms of biological role, may mediate the reduction of outer membrane cytochrome b5. The sequence is that of NADH-cytochrome b5 reductase 2 (MCR1) from Chaetomium globosum (strain ATCC 6205 / CBS 148.51 / DSM 1962 / NBRC 6347 / NRRL 1970) (Soil fungus).